The primary structure comprises 507 residues: RNA polymerase I-specific transcription initiation factor RRN11 (507 aa).

Residues 37–47 (KSTTTDSLPTP) show a composition bias toward polar residues. Disordered regions lie at residues 37 to 76 (KSTT…LQQK) and 89 to 124 (GEIY…SDEE). Residues 97–108 (SETDSQEEETEE) are compositionally biased toward acidic residues. A compositionally biased stretch (basic and acidic residues) spans 109-124 (GGEHDTGIDKEDSDEE).

In terms of assembly, component of the core factor (CF) complex, which consists of RRN6, RRN7 and RRN11. The CF heterotrimer may further dimerize to form a hexamer. RRN11 interacts with RRN6, RRN7 and SPT15.

The protein localises to the nucleus. Its subcellular location is the nucleolus. Functionally, acts as a component of the core factor (CF) complex which is essential for the initiation of rDNA transcription by RNA polymerase I. After binding of UAF (upstream activation factor) to an upstream element of the promoter, CF is recruited in a SPT15/TBP-dependent manner to form a preinitiation complex. In Saccharomyces cerevisiae (strain ATCC 204508 / S288c) (Baker's yeast), this protein is RNA polymerase I-specific transcription initiation factor RRN11 (RRN11).